The following is a 221-amino-acid chain: GFP-like non-fluorescent chromoprotein (221 aa).

Positions 62–64 (QYG) form a cross-link, 2-iminomethyl-5-imidazolinone (Gln-Gly). Position 63 is a 2,3-didehydrotyrosine (Tyr63).

This sequence belongs to the GFP family. As to quaternary structure, homotetramer. Contains a chromophore consisting of modified amino acid residues. The chromophore is formed by autocatalytic backbone condensation between Xaa-N and Gly-(N+2), oxidation of Tyr-(N+1) to didehydrotyrosine, and formation of a double bond to the alpha-amino nitrogen of residue Xaa-N. Maturation of the chromophore requires nothing other than molecular oxygen. The precise stereochemistry of the tyrosine has not been determined.

Non-fluorescent pigment protein that is lilac in color. This chain is GFP-like non-fluorescent chromoprotein, found in Goniopora tenuidens (Anemone coral).